Reading from the N-terminus, the 199-residue chain is Fe/S biogenesis protein NfuA (199 aa).

Residues Cys151 and Cys154 each contribute to the [4Fe-4S] cluster site.

This sequence belongs to the NfuA family. Homodimer. Requires [4Fe-4S] cluster as cofactor.

Functionally, involved in iron-sulfur cluster biogenesis. Binds a 4Fe-4S cluster, can transfer this cluster to apoproteins, and thereby intervenes in the maturation of Fe/S proteins. Could also act as a scaffold/chaperone for damaged Fe/S proteins. The sequence is that of Fe/S biogenesis protein NfuA from Stenotrophomonas maltophilia (strain K279a).